The following is a 116-amino-acid chain: Anti-sigma F factor antagonist (116 aa).

An STAS domain is found at 3–113 (LAIDLEVKKD…ESEQYALHRL (111 aa)). Phosphoserine is present on Ser58.

Belongs to the anti-sigma-factor antagonist family. Phosphorylated by SpoIIAB on a serine residue.

Its function is as follows. In the phosphorylated form it could act as an anti-anti-sigma factor that counteracts SpoIIAB and thus releases sigma f from inhibition. The protein is Anti-sigma F factor antagonist (spoIIAA) of Heyndrickxia coagulans (Weizmannia coagulans).